Reading from the N-terminus, the 1365-residue chain is Killer toxin-resistance protein 5 (1365 aa).

The N-terminal stretch at 1 to 17 (MRLLALVLLLLCAPLRA) is a signal peptide. Residues Asn-115, Asn-228, Asn-293, Asn-457, Asn-519, Asn-523, Asn-644, Asn-870, Asn-1091, Asn-1150, and Asn-1195 are each glycosylated (N-linked (GlcNAc...) asparagine). The disordered stretch occupies residues 1334–1365 (FASSPGDEDVPGESVSSKYQDSDNAAPLHDEL). The span at 1347–1356 (SVSSKYQDSD) shows a compositional bias: polar residues. A Prevents secretion from ER motif is present at residues 1362–1365 (HDEL).

To D.melanogaster UGGG.

It localises to the endoplasmic reticulum lumen. In terms of biological role, required for (1-&gt;6)-beta-D-glucan synthesis and normal cell growth. The sequence is that of Killer toxin-resistance protein 5 (KRE5) from Saccharomyces cerevisiae (strain ATCC 204508 / S288c) (Baker's yeast).